The primary structure comprises 391 residues: MEKIGVLLMNLGGPERITDVGPFLYNLFSDPEIIRLPVPAFQKPLAWLISTLRSTTSQQAYLSIGGGSPIRRITEQQARELQSKLRDKGLNVTTYIAMRYWHPFTESAIADMKADGIDQIVVLPLYPHFSISTSGSSFRELKKLRDSDSDFKKIPMRCVRSWFSQSGYLKSMVELISEQISLCESPADAHIFFTAHGVPKSYVEEAGDPYKEQIEDCSLLIINELEKYLGHSNSYTLSYQSRVGPVEWLKPYTEEVLTDLGKAKVNDLIVVPISFVGEHIETLQEIDIEYKEIAEKAGIVNFRRVKALNTHPTFIEGLSDLVVSSLNGPVVNIEKASELPEKVKLYPQEKWQWGWNNSSEVWNGRVAMIVFLILFIELISGSGPLHKLGIL.

Residues H196 and E281 each contribute to the Fe cation site.

The protein belongs to the ferrochelatase family.

The protein localises to the cytoplasm. It carries out the reaction heme b + 2 H(+) = protoporphyrin IX + Fe(2+). It participates in porphyrin-containing compound metabolism; protoheme biosynthesis; protoheme from protoporphyrin-IX: step 1/1. Functionally, catalyzes the ferrous insertion into protoporphyrin IX. This is Ferrochelatase from Prochlorococcus marinus (strain MIT 9515).